The sequence spans 354 residues: Guanine nucleotide-binding protein G(i) subunit alpha-3 (354 aa).

G2 carries the N-myristoyl glycine lipid modification. C3 carries S-palmitoyl cysteine lipidation. A G-alpha domain is found at 32–354 (KEVKLLLLGA…KNNLKECGLY (323 aa)). Residues 35–48 (KLLLLGAGESGKST) form a G1 motif region. GTP-binding residues include G42, E43, S44, G45, K46, S47, T48, D150, S151, L175, R176, T177, R178, V179, K180, T181, V201, G203, N269, K270, D272, L273, C325, A326, and T327. Mg(2+) is bound at residue S47. Positions 173 to 181 (DVLRTRVKT) are G2 motif. T181 contributes to the Mg(2+) binding site. The interval 196–205 (FKMFDVGGQR) is G3 motif. A G4 motif region spans residues 265-272 (ILFLNKKD). The tract at residues 324-329 (TCATDT) is G5 motif.

The protein belongs to the G-alpha family. G(i/o/t/z) subfamily. In terms of assembly, heterotrimeric G proteins are composed of 3 units; alpha, beta and gamma. The alpha subunit contains the guanine nucleotide binding site. GTP binding causes dissociation of the heterotrimer, liberating the individual subunits so that they can interact with downstream effector proteins. Forms a complex with CCDC88A/GIV and EGFR which leads to enhanced EGFR signaling and triggering of cell migration; ligand stimulation is required for recruitment of GNAI3 to the complex. Interacts (inactive GDP-bound form) with CCDC88A/GIV (via GBA motif); the interaction leads to activation of GNAI3. Interacts (inactive GDP-bound form) with CCDC88C/DAPLE (via GBA motif); the interaction leads to activation of GNAI3. Interacts (inactive GDP-bound form) with NUCB1 (via GBA motif) and NUCB2 (via GBA motif); the interaction leads to activation of GNAI3. Interacts (inactive GDP-bound form) with PLCD4 (via GBA motif); the interaction leads to activation of GNAI3. Interacts with INSR; the interaction is probably mediated by CCDC88A/GIV. Interacts with GPSM1. Interacts (GDP-bound form) with GPSM2 (via GoLoco domains). Does not interact with RGS2. Interacts with RGS8 and RGS10; this strongly enhances the intrinsic GTPase activity. Interacts with RGS16; this strongly enhances the intrinsic GTPase activity. Interacts with RGS12. Interacts (via active GTP- or inactive GDP-bound form) with RGS14. Interacts (via active GTP-bound form) with TRPC5 (via ANK repeats) in a homotetrameric ion channel; the interaction is direct and activates the channel activity. As to expression, ubiquitously expressed.

Its subcellular location is the cytoplasm. The protein resides in the cell membrane. It localises to the cytoskeleton. The protein localises to the microtubule organizing center. It is found in the centrosome. Functionally, heterotrimeric guanine nucleotide-binding proteins (G proteins) function as transducers downstream of G protein-coupled receptors (GPCRs) in numerous signaling cascades. The alpha chain contains the guanine nucleotide binding site and alternates between an active, GTP-bound state and an inactive, GDP-bound state. Signaling by an activated GPCR promotes GDP release and GTP binding. The alpha subunit has a low GTPase activity that converts bound GTP to GDP, thereby terminating the signal. Both GDP release and GTP hydrolysis are modulated by numerous regulatory proteins. Signaling is mediated via effector proteins, such as adenylate cyclase. Inhibits adenylate cyclase activity, leading to decreased intracellular cAMP levels. Stimulates the activity of receptor-regulated K(+) channels. The active GTP-bound form prevents the association of RGS14 with centrosomes and is required for the translocation of RGS14 from the cytoplasm to the plasma membrane. May play a role in cell division. The active GTP-bound form activates the calcium permeant TRPC5 ion channels. The chain is Guanine nucleotide-binding protein G(i) subunit alpha-3 (GNAI3) from Cavia porcellus (Guinea pig).